A 262-amino-acid chain; its full sequence is Aminoglycoside (3'') (9) adenylyltransferase (262 aa).

The adenylyltransferase domain stretch occupies residues 1–157 (MTLSIPPSIQ…ERAERLFTPA (157 aa)). The ATP site is built by Ser-36, Ser-46, and Asp-47. Mg(2+)-binding residues include Asp-47, Asp-49, and Glu-87. The active-site Proton acceptor is the Glu-87. Asp-130 serves as a coordination point for ATP. The segment at 158 to 262 (PAAQLLKALR…AKAHIPTQFT (105 aa)) is helical domain. Streptomycin is bound by residues 173-178 (WQSTAD) and His-185. Residues Lys-205 and Tyr-231 each coordinate ATP.

In terms of assembly, monomer.

The catalysed reaction is streptomycin + ATP = 3''-O-adenylylstreptomycin + diphosphate. It catalyses the reaction spectinomycin + ATP = 9-O-adenylylspectinomycin + diphosphate. Its function is as follows. Mediates bacterial resistance to the antibiotics streptomycin and spectinomycin, does not confer resistance to kanamycin. Binds ATP first, then antibiotic. This chain is Aminoglycoside (3'') (9) adenylyltransferase (aadA), found in Salmonella typhimurium (strain LT2 / SGSC1412 / ATCC 700720).